A 205-amino-acid polypeptide reads, in one-letter code: MKVPFVNFMISSFPAAVLVGAVVGFMIGRKYSVADASRGYSSKNANKASNPEKESPVSVSNDEDSESETELLDMLKGNSSLAALALAEGQTKMVLVVRTDLGMTKGKIAAQCAHAALACYKIASAVDPDLVRIWENAGQAKITLQAQTEETLELLQAQAMSLGLCARVIHDAGRTQIASGSATVLGIGPGPVSVINEVTGSLKLF.

The span at 40–49 (YSSKNANKAS) shows a compositional bias: polar residues. Residues 40–68 (YSSKNANKASNPEKESPVSVSNDEDSESE) are disordered. Phosphoserine is present on residues Ser-65 and Ser-79.

The protein belongs to the PTH2 family.

The catalysed reaction is an N-acyl-L-alpha-aminoacyl-tRNA + H2O = an N-acyl-L-amino acid + a tRNA + H(+). In terms of biological role, the natural substrate for this enzyme may be peptidyl-tRNAs which drop off the ribosome during protein synthesis. This is Probable peptidyl-tRNA hydrolase 2 from Schizosaccharomyces pombe (strain 972 / ATCC 24843) (Fission yeast).